An 88-amino-acid chain; its full sequence is Small ribosomal subunit protein uS15c (88 aa).

The protein belongs to the universal ribosomal protein uS15 family. In terms of assembly, part of the 30S ribosomal subunit.

It is found in the plastid. The protein resides in the chloroplast. The polypeptide is Small ribosomal subunit protein uS15c (rps15) (Pinus thunbergii (Japanese black pine)).